A 342-amino-acid polypeptide reads, in one-letter code: Elongation factor Ts (342 aa).

The interval 80–83 is involved in Mg(2+) ion dislocation from EF-Tu; that stretch reads TDFV.

This sequence belongs to the EF-Ts family.

Its subcellular location is the cytoplasm. Associates with the EF-Tu.GDP complex and induces the exchange of GDP to GTP. It remains bound to the aminoacyl-tRNA.EF-Tu.GTP complex up to the GTP hydrolysis stage on the ribosome. This chain is Elongation factor Ts, found in Lactobacillus delbrueckii subsp. bulgaricus (strain ATCC 11842 / DSM 20081 / BCRC 10696 / JCM 1002 / NBRC 13953 / NCIMB 11778 / NCTC 12712 / WDCM 00102 / Lb 14).